The following is a 643-amino-acid chain: COP9 signalosome complex subunit 10 (643 aa).

Positions methionine 1–aspartate 33 are enriched in acidic residues. Residues methionine 1 to arginine 37 are disordered. The 187-residue stretch at cysteine 331–histidine 517 folds into the PCI domain. Polar residues predominate over residues aspartate 573–serine 584. Residues aspartate 573–proline 594 form a disordered region.

Component of a COP9 signalosome-like (CSN) complex.

Its subcellular location is the cytoplasm. It localises to the nucleus. Functionally, component of the COP9 signalosome (CSN) complex that acts as an regulator of the ubiquitin (Ubl) conjugation pathway by mediating the deneddylation of the cullin subunit of SCF-type E3 ubiquitin-protein ligase complexes. The CSN complex is involved in the regulation of the mating pheromone response. The chain is COP9 signalosome complex subunit 10 (RRI2) from Candida glabrata (strain ATCC 2001 / BCRC 20586 / JCM 3761 / NBRC 0622 / NRRL Y-65 / CBS 138) (Yeast).